Reading from the N-terminus, the 398-residue chain is Selenide, water dikinase (398 aa).

The disordered stretch occupies residues 1–21 (MSHKRPQSSAGESNGAVDLKT). The active site involves C46. ATP-binding positions include K49, 72 to 74 (GMD), D97, D120, and 171 to 174 (GGQT). Residue D74 coordinates Mg(2+). D120 serves as a coordination point for Mg(2+). D278 lines the Mg(2+) pocket.

Belongs to the selenophosphate synthase 1 family. Class I subfamily. In terms of assembly, homodimer. The cofactor is Mg(2+).

It catalyses the reaction hydrogenselenide + ATP + H2O = selenophosphate + AMP + phosphate + 2 H(+). Its function is as follows. Synthesizes selenophosphate from selenide and ATP. The sequence is that of Selenide, water dikinase from Leishmania major.